The following is a 299-amino-acid chain: Circadian clock oscillator protein KaiA (299 aa).

Residues 9–148 (SRPQIFICTL…LQLSKACRLP (140 aa)) form a psR domain, binds oxidized quinones region. One can recognise a KaiA N-terminal domain in the interval 9–179 (SRPQIFICTL…RLSQKLKERL (171 aa)). The interval 180–188 (GYLGVYYKR) is flexible linker. In terms of domain architecture, KaiA C-terminal spans 189–297 (NPQQFFHKLT…CEMYRRSIPK (109 aa)).

As to quaternary structure, homodimer. The KaiABC complex composition changes during the circadian cycle to control KaiC phosphorylation. Complexes KaiC(6), KaiA(2-4):KaiC(6), KaiB(6):KaiC(6) and KaiC(6):KaiB(6):KaiA(12) are among the most important forms, many form cooperatively. KaiA and CikA bind to the same region of the KaiB(fs) form and therefore compete.

Key component of the KaiABC oscillator complex, which constitutes the main circadian regulator in cyanobacteria. Complex composition changes during the circadian cycle to control KaiC phosphorylation. KaiA stimulates KaiC autophosphorylation, while KaiB sequesters KaiA, leading to KaiC autodephosphorylation. KaiA binding to the KaiC CII domain during the subjective day yields KaiA(2-4):KaiC(6) complexes which stimulate KaiC autophosphorylation. Phospho-Ser-431 KaiC accumulation triggers binding of KaiB during the subjective night to form the KaiB(6):KaiC(6) complex, leading to changes in the output regulators CikA and SasA. KaiB(6):KaiC(6) formation exposes a site for KaiA binding on KaiB that sequesters KaiA from KaiC's CII domain, making the KaiC(6):KaiB(6):KaiA(12) complex resulting in KaiC autodephosphorylation. Complete dephosphorylation of KaiC leads to dissociation of KaiA(2):KaiB(1), completing 1 cycle of the Kai oscillator. Functionally, binds oxidized quinones via the N-terminal PsR domain, allowing it to sense redox changes and possibly mediate clock input. The chain is Circadian clock oscillator protein KaiA from Acaryochloris marina (strain MBIC 11017).